Here is a 307-residue protein sequence, read N- to C-terminus: sn-1-specific diacylglycerol lipase ABHD11 (307 aa).

The transit peptide at 1–34 (MLRWARAWRVPRGVLGASSPRRLAVPVTFCSSRS) directs the protein to the mitochondrion. At K79 the chain carries N6-succinyllysine. S133 (charge relay system) is an active-site residue. N6-succinyllysine is present on K196. Residues D229 and H288 each act as charge relay system in the active site.

This sequence belongs to the AB hydrolase superfamily. As to quaternary structure, interacts with OGDH and DLST; this interaction maintains the functional lipoylation of the 2-oxoglutarate dehydrogenase complex. Phosphorylated. In terms of tissue distribution, expressed in white adipose tissues.

The protein localises to the mitochondrion. It localises to the mitochondrion matrix. The catalysed reaction is 1-octadecanoyl-2-(5Z,8Z,11Z,14Z-eicosatetraenoyl)-sn-glycerol + H2O = 2-(5Z,8Z,11Z,14Z-eicosatetraenoyl)-glycerol + octadecanoate + H(+). The enzyme catalyses a 1,2-diacyl-sn-glycerol + H2O = a 2-acylglycerol + a fatty acid + H(+). It catalyses the reaction a 1,3-diacyl-sn-glycerol + H2O = a 1-acyl-sn-glycerol + a fatty acid + H(+). It carries out the reaction 1-octadecanoyl-2-(9Z-octadecenoyl)-sn-glycerol + H2O = 2-(9Z-octadecenoyl)-glycerol + octadecanoate + H(+). The catalysed reaction is 1-octadecanoyl-2-(4Z,7Z,10Z,13Z,16Z,19Z-docosahexaenoyl)-sn-glycerol + H2O = 2-(4Z,7Z,10Z,13Z,16Z,19Z-docosahexaenoyl)-glycerol + octadecanoate + H(+). The enzyme catalyses 1,2-didecanoylglycerol + H2O = decanoylglycerol + decanoate + H(+). Catalyzes the hydrolysis of diacylglycerol in vitro and may function as a key regulator in lipid metabolism, namely by regulating the intracellular levels of diacylglycerol. 1,2-diacyl-sn-glycerols are the preferred substrate over 1,3-diacyl-sn-glycerols. The enzyme hydrolyzes stearate in preference to palmitate from the sn-1 position of 1,2-diacyl-sn-glycerols. Maintains the functional lipoylation of the 2-oxoglutarate dehydrogenase complex (OGDHc) through its interaction with the OGDHc by preventing the formation of lipoyl adducts. In addition, is also required for the expansion and differentiation of embryonic stem cells (ESCs). In Mus musculus (Mouse), this protein is sn-1-specific diacylglycerol lipase ABHD11.